Consider the following 299-residue polypeptide: Non-homologous end joining protein Ku (299 aa).

Positions 10–188 (ISFGLVHIPV…TEAVTDARLT (179 aa)) constitute a Ku domain. Disordered regions lie at residues 227-249 (AGEG…SADV) and 261-299 (AGKS…GKAS). Residues 273-283 (AAKDKVADKQS) are compositionally biased toward basic and acidic residues. The span at 284 to 299 (PKPKRPAVRKKTGKAS) shows a compositional bias: basic residues.

It belongs to the prokaryotic Ku family. In terms of assembly, homodimer. Interacts with LigD.

With LigD forms a non-homologous end joining (NHEJ) DNA repair enzyme, which repairs dsDNA breaks with reduced fidelity. Binds linear dsDNA with 5'- and 3'- overhangs but not closed circular dsDNA nor ssDNA. Recruits and stimulates the ligase activity of LigD. The chain is Non-homologous end joining protein Ku from Pseudomonas syringae pv. tomato (strain ATCC BAA-871 / DC3000).